A 410-amino-acid polypeptide reads, in one-letter code: Peptidase T (410 aa).

The segment at 11–30 (RYAEIDTQSDPDSESTPSTE) is disordered. His78 is a binding site for Zn(2+). Asp80 is an active-site residue. Asp140 provides a ligand contact to Zn(2+). Catalysis depends on Glu174, which acts as the Proton acceptor. Residues Glu175, Asp197, and His379 each coordinate Zn(2+).

This sequence belongs to the peptidase M20B family. Zn(2+) serves as cofactor.

Its subcellular location is the cytoplasm. It carries out the reaction Release of the N-terminal residue from a tripeptide.. Its function is as follows. Cleaves the N-terminal amino acid of tripeptides. The protein is Peptidase T of Staphylococcus carnosus (strain TM300).